Reading from the N-terminus, the 437-residue chain is Enolase 1 (437 aa).

Lys-60 is covalently cross-linked (Glycyl lysine isopeptide (Lys-Gly) (interchain with G-Cter in ubiquitin)). Phosphoserine occurs at positions 119 and 138. 2 residues coordinate substrate: His-160 and Glu-169. Ser-188 is subject to Phosphoserine. Glu-212 serves as the catalytic Proton donor. Residue Lys-243 forms a Glycyl lysine isopeptide (Lys-Gly) (interchain with G-Cter in ubiquitin) linkage. Asp-247 and Glu-296 together coordinate Mg(2+). Glu-296 contacts substrate. A Phosphothreonine modification is found at Thr-313. Asp-321 contributes to the substrate binding site. Asp-321 contacts Mg(2+). Thr-324 bears the Phosphothreonine mark. The Proton acceptor role is filled by Lys-346. A Glycyl lysine isopeptide (Lys-Gly) (interchain with G-Cter in ubiquitin) cross-link involves residue Lys-358. Substrate contacts are provided by residues 373–376 and Lys-397; that span reads SHRS.

The protein belongs to the enolase family. In terms of assembly, homodimer. Mg(2+) is required as a cofactor.

It localises to the cytoplasm. It catalyses the reaction (2R)-2-phosphoglycerate = phosphoenolpyruvate + H2O. Its pathway is carbohydrate degradation; glycolysis; pyruvate from D-glyceraldehyde 3-phosphate: step 4/5. The polypeptide is Enolase 1 (ENO1) (Saccharomyces cerevisiae (strain ATCC 204508 / S288c) (Baker's yeast)).